A 275-amino-acid polypeptide reads, in one-letter code: uncharacterized protein (275 aa).

This sequence belongs to the MtfA family.

This is an uncharacterized protein from Synechocystis sp. (strain ATCC 27184 / PCC 6803 / Kazusa).